A 206-amino-acid polypeptide reads, in one-letter code: Na(+)-translocating NADH-quinone reductase subunit E (206 aa).

Helical transmembrane passes span 12-32 (AVFVENMALAFFLGMCTFIAI), 36-56 (IQTAIGLGIAVVVVLAITVPV), 85-105 (FLGLLSYIGVIAAIVQILEMT), 118-138 (GIFLPLITVNCAIMGASLFMV), 148-168 (VVYGVGAGVGWALAITLLAGI), and 184-204 (LGITFITVGLMSLGFMSFSGV).

This sequence belongs to the NqrDE/RnfAE family. As to quaternary structure, composed of six subunits; NqrA, NqrB, NqrC, NqrD, NqrE and NqrF.

Its subcellular location is the cell inner membrane. It catalyses the reaction a ubiquinone + n Na(+)(in) + NADH + H(+) = a ubiquinol + n Na(+)(out) + NAD(+). In terms of biological role, NQR complex catalyzes the reduction of ubiquinone-1 to ubiquinol by two successive reactions, coupled with the transport of Na(+) ions from the cytoplasm to the periplasm. NqrA to NqrE are probably involved in the second step, the conversion of ubisemiquinone to ubiquinol. The protein is Na(+)-translocating NADH-quinone reductase subunit E of Alcanivorax borkumensis (strain ATCC 700651 / DSM 11573 / NCIMB 13689 / SK2).